A 483-amino-acid polypeptide reads, in one-letter code: UDP-N-acetylmuramoyl-L-alanyl-D-glutamate--L-lysine ligase (483 aa).

S44 contributes to the UDP-N-acetyl-alpha-D-muramoyl-L-alanyl-D-glutamate binding site. 120–126 (GTKGKTT) is a binding site for ATP. UDP-N-acetyl-alpha-D-muramoyl-L-alanyl-D-glutamate is bound by residues 162 to 163 (TT), S189, and R197. Position 231 is an N6-carboxylysine (K231). Positions 406-409 (DDPN) match the L-lysine recognition motif motif.

Belongs to the MurCDEF family. MurE subfamily. Carboxylation is probably crucial for Mg(2+) binding and, consequently, for the gamma-phosphate positioning of ATP.

It is found in the cytoplasm. The enzyme catalyses UDP-N-acetyl-alpha-D-muramoyl-L-alanyl-D-glutamate + L-lysine + ATP = UDP-N-acetyl-alpha-D-muramoyl-L-alanyl-gamma-D-glutamyl-L-lysine + ADP + phosphate + H(+). It participates in cell wall biogenesis; peptidoglycan biosynthesis. Functionally, catalyzes the addition of L-lysine to the nucleotide precursor UDP-N-acetylmuramoyl-L-alanyl-D-glutamate (UMAG) in the biosynthesis of bacterial cell-wall peptidoglycan. The chain is UDP-N-acetylmuramoyl-L-alanyl-D-glutamate--L-lysine ligase from Streptococcus mutans serotype c (strain ATCC 700610 / UA159).